A 281-amino-acid chain; its full sequence is Phosphonates import ATP-binding protein PhnC 2 (281 aa).

The 235-residue stretch at 4-238 (LTVDNVTKTY…LVDDLYGNVE (235 aa)) folds into the ABC transporter domain. 35-42 (GESGAGKS) is an ATP binding site. Positions 243 to 281 (ATDNSDNSTVDTSDGTRYDTETGSDGTDEVDVIGRQVES) are disordered. Low complexity predominate over residues 244–255 (TDNSDNSTVDTS).

Belongs to the ABC transporter superfamily. Phosphonates importer (TC 3.A.1.9.1) family. In terms of assembly, the complex is composed of two ATP-binding proteins (PhnC), two transmembrane proteins (PhnE) and a solute-binding protein (PhnD).

The protein localises to the cell membrane. It catalyses the reaction phosphonate(out) + ATP + H2O = phosphonate(in) + ADP + phosphate + H(+). Functionally, part of the ABC transporter complex PhnCDE involved in phosphonates import. Responsible for energy coupling to the transport system. This is Phosphonates import ATP-binding protein PhnC 2 from Haloquadratum walsbyi (strain DSM 16790 / HBSQ001).